A 101-amino-acid polypeptide reads, in one-letter code: Pro-corazonin (101 aa).

The signal sequence occupies residues 1–16 (MLVLFVLSLVVSCALC). Asparagine 27 carries the post-translational modification Asparagine amide. A propeptide spanning residues 31–101 (SNFPAEISAL…REKAPNNDNY (71 aa)) is cleaved from the precursor.

Belongs to the corazonin family. As to expression, expressed in central brain and the retrocerebral complex but not in antennal lobes, optic lobes or in gnathal, thoracic and abdominal ganglia (at protein level).

The protein localises to the secreted. In terms of biological role, cardioactive peptide. Corazonin is probably involved in the physiological regulation of the heart beat. The protein is Pro-corazonin of Camponotus floridanus (Florida carpenter ant).